The primary structure comprises 331 residues: DNA-directed RNA polymerase subunit alpha (331 aa).

Positions 1-242 (MEKFLRYNIQ…EHYKPIVTEL (242 aa)) are alpha N-terminal domain (alpha-NTD). Positions 258–331 (VSSSKSSLAI…RNLKLKEEQN (74 aa)) are alpha C-terminal domain (alpha-CTD).

Belongs to the RNA polymerase alpha chain family. As to quaternary structure, homodimer. The RNAP catalytic core consists of 2 alpha, 1 beta, 1 beta' and 1 omega subunit. When a sigma factor is associated with the core the holoenzyme is formed, which can initiate transcription.

It catalyses the reaction RNA(n) + a ribonucleoside 5'-triphosphate = RNA(n+1) + diphosphate. Its function is as follows. DNA-dependent RNA polymerase catalyzes the transcription of DNA into RNA using the four ribonucleoside triphosphates as substrates. The chain is DNA-directed RNA polymerase subunit alpha from Malacoplasma penetrans (strain HF-2) (Mycoplasma penetrans).